Consider the following 348-residue polypeptide: Protein RecA (348 aa).

66–73 lines the ATP pocket; sequence GPESSGKT.

This sequence belongs to the RecA family.

The protein localises to the cytoplasm. Its function is as follows. Can catalyze the hydrolysis of ATP in the presence of single-stranded DNA, the ATP-dependent uptake of single-stranded DNA by duplex DNA, and the ATP-dependent hybridization of homologous single-stranded DNAs. It interacts with LexA causing its activation and leading to its autocatalytic cleavage. The polypeptide is Protein RecA (Legionella pneumophila).